The following is an 802-amino-acid chain: Post-transcriptional regulator mkt1 (802 aa).

Residues Ser-227, Ser-228, and Ser-230 each carry the phosphoserine modification.

This sequence belongs to the XPG/RAD2 endonuclease family. In terms of assembly, interacts with pab1 binding protein ath1.

In terms of biological role, involved in post-transcriptional regulation of gene expression by 3'-UTR-mediated RNA regulation. Promotes interactions between mRNA and poly(A)-binding protein. Binds the 3' UTR of mRNAs, centromeric transcripts and antisense-rDNA. Required for the establishment but not the maintenance of heterochromatin at pericentromeres, and for the maintenance of small domains of facultative heterochromatin known as HOODs. This chain is Post-transcriptional regulator mkt1, found in Schizosaccharomyces pombe (strain 972 / ATCC 24843) (Fission yeast).